The primary structure comprises 199 residues: V-type ATP synthase subunit E (199 aa).

The protein belongs to the V-ATPase E subunit family.

Functionally, produces ATP from ADP in the presence of a proton gradient across the membrane. This is V-type ATP synthase subunit E from Clostridium botulinum (strain Hall / ATCC 3502 / NCTC 13319 / Type A).